The following is a 341-amino-acid chain: L-threonine 3-dehydrogenase (341 aa).

Position 38 (cysteine 38) interacts with Zn(2+). Active-site charge relay system residues include threonine 40 and histidine 43. Zn(2+) contacts are provided by histidine 63, glutamate 64, cysteine 93, cysteine 96, cysteine 99, and cysteine 107. NAD(+) contacts are provided by residues isoleucine 175, aspartate 195, arginine 200, 262–264 (LGI), and 286–287 (IY).

This sequence belongs to the zinc-containing alcohol dehydrogenase family. In terms of assembly, homotetramer. It depends on Zn(2+) as a cofactor.

It is found in the cytoplasm. The enzyme catalyses L-threonine + NAD(+) = (2S)-2-amino-3-oxobutanoate + NADH + H(+). It participates in amino-acid degradation; L-threonine degradation via oxydo-reductase pathway; glycine from L-threonine: step 1/2. In terms of biological role, catalyzes the NAD(+)-dependent oxidation of L-threonine to 2-amino-3-ketobutyrate. This chain is L-threonine 3-dehydrogenase, found in Colwellia psychrerythraea (strain 34H / ATCC BAA-681) (Vibrio psychroerythus).